A 174-amino-acid chain; its full sequence is CASP-like protein 4D2 (174 aa).

The Cytoplasmic portion of the chain corresponds to 1–14; sequence MAPPPPSPPAVSLK. The helical transmembrane segment at 15-35 threads the bilayer; it reads VLLLLLRVLTGVFLVIALIIL. The Extracellular segment spans residues 36 to 60; the sequence is STNSVTIVSQGSALKFHFKDVYAYR. The chain crosses the membrane as a helical span at residues 61 to 81; sequence YMLSAAVIGLVYAVIQLFFTI. The Cytoplasmic portion of the chain corresponds to 82–97; sequence SEFATGVKNPFNYQLD. A helical membrane pass occupies residues 98-118; the sequence is FYGDKLISYLVATGSAAGFGV. Residues 119–150 lie on the Extracellular side of the membrane; sequence TKDLKDTFLALVALDSTDPVDKFFSKGYASAS. The chain crosses the membrane as a helical span at residues 151–171; the sequence is LLLFAFICLAVLSVFSSFAMA. At 172 to 174 the chain is on the cytoplasmic side; sequence KRN.

The protein belongs to the Casparian strip membrane proteins (CASP) family. In terms of assembly, homodimer and heterodimers.

The protein localises to the cell membrane. This chain is CASP-like protein 4D2, found in Arabidopsis thaliana (Mouse-ear cress).